A 190-amino-acid chain; its full sequence is uncharacterized protein (190 aa).

Transmembrane regions (helical) follow at residues 15 to 35 (LVMSCSVTLLFSSSLSFVLAI), 58 to 78 (FSSFFFFFTTSPDSSPVGVLI), 94 to 114 (FFSASSLYSSIDLGSILYFAF), and 148 to 168 (FLFFVGSSKAFLTCSSLSFFV).

Its subcellular location is the membrane. This is an uncharacterized protein from Saccharomyces cerevisiae (strain ATCC 204508 / S288c) (Baker's yeast).